A 275-amino-acid chain; its full sequence is Subtilisin (275 aa).

Gln2 is a binding site for Ca(2+). One can recognise a Peptidase S8 domain in the interval 5–274; sequence PYGISQIKAP…KGLINVQAAA (270 aa). Residue Asp32 is the Charge relay system of the active site. Asp41 contributes to the Ca(2+) binding site. His64 functions as the Charge relay system in the catalytic mechanism. Ca(2+)-binding residues include Leu75, Asn77, Ile79, Val81, Ala169, Tyr171, and Thr174. Ser221 serves as the catalytic Charge relay system.

This sequence belongs to the peptidase S8 family. It depends on Ca(2+) as a cofactor.

It localises to the secreted. It catalyses the reaction Hydrolysis of proteins with broad specificity for peptide bonds, and a preference for a large uncharged residue in P1. Hydrolyzes peptide amides.. In terms of biological role, subtilisin is an extracellular alkaline serine protease, it catalyzes the hydrolysis of proteins and peptide amides. The sequence is that of Subtilisin (apr) from Bacillus pumilus (Bacillus mesentericus).